The sequence spans 162 residues: Anaerobic nitrite reductase GLB1 (162 aa).

The Globin domain occupies 9–159; the sequence is VFSEEKEALV…LVAAIKQEMK (151 aa). The short motif at 42–46 is the Homodimerization element; sequence EIAPS. Residues Lys66, His70, Arg100, Thr104, and His105 each coordinate heme b. Positions 112–124 match the Homodimerization motif; it reads DGHFEVTRFALLE.

The protein belongs to the plant globin family. As to quaternary structure, homodimer. It depends on heme b as a cofactor. As to expression, seeds and roots.

The protein resides in the cytoplasm. It is found in the nucleus. The catalysed reaction is Fe(III)-heme b-[protein] + nitric oxide + H2O = Fe(II)-heme b-[protein] + nitrite + 2 H(+). Its function is as follows. Phytoglobin that reduces nitrite to nitric oxide (NO) under anoxic conditions (e.g. during flooding or in waterlogged soil). May not function as an oxygen storage or transport protein. Has an unusually high affinity for O(2) through an hexacoordinate heme iron because of a very low dissociation constant. The chain is Anaerobic nitrite reductase GLB1 from Hordeum vulgare (Barley).